The primary structure comprises 475 residues: Glycogen synthase (475 aa).

Position 15 (Lys15) interacts with ADP-alpha-D-glucose.

This sequence belongs to the glycosyltransferase 1 family. Bacterial/plant glycogen synthase subfamily.

The catalysed reaction is [(1-&gt;4)-alpha-D-glucosyl](n) + ADP-alpha-D-glucose = [(1-&gt;4)-alpha-D-glucosyl](n+1) + ADP + H(+). It participates in glycan biosynthesis; glycogen biosynthesis. In terms of biological role, synthesizes alpha-1,4-glucan chains using ADP-glucose. This Chlamydia caviae (strain ATCC VR-813 / DSM 19441 / 03DC25 / GPIC) (Chlamydophila caviae) protein is Glycogen synthase.